A 160-amino-acid polypeptide reads, in one-letter code: Cell cycle regulator of non-homologous end joining (160 aa).

The residue at position 1 (Met-1) is an N-acetylmethionine. The KBM motif lies at 1–21; the sequence is METLKSDNKKRVLPSWMTAPG. The interval 78-152 is disordered; the sequence is KPWEQPSLVA…EGKEEEDELK (75 aa). Positions 99–109 are enriched in low complexity; it reads ESPHTSSPGSS. The XLM motif lies at 150-160; that stretch reads ELKYVREIFFS.

In terms of assembly, interacts (via KBM motif) with XRCC5/Ku80 and XRCC6/Ku70 heterodimer. Interacts (via XLF motif) with TRIM28/KAP1, ATM, MRE11, NBN and RAD50. Interacts with splicing factor SF3B1. Interacts with ERCC6L2; this interaction is DNA independent.

The protein localises to the cytoplasm. It localises to the nucleus. It is found in the chromosome. Functionally, cell-cycle-specific regulator of classical non-homologous end joining (NHEJ) of DNA double-strand break (DSB) repair, which can act both as an activator or inhibitor of NHEJ, depending on the cell cycle phase. Acts as a regulator of DNA repair pathway choice by specifically inhibiting classical NHEJ during the S and G2 phases, thereby promoting error-free repair by homologous recombination during cell cycle phases when sister chromatids are present. Preferentially protects single-stranded overhangs at break sites by inhibiting classical NHEJ, thereby creating a local environment that favors homologous recombination. Acts via interaction with XRCC5/Ku80 and XRCC6/Ku70. In contrast, acts as an activator of NHEJ during G1 phase of the cell cycle: promotes classical NHEJ in G1 phase cells via multivalent interactions that increase the affinity of DNA damage response proteins for DSB-associated chromatin. Also involved in immunoglobulin V(D)J recombination. May also act as an indirect regulator of proteasome. This is Cell cycle regulator of non-homologous end joining from Rattus norvegicus (Rat).